The sequence spans 464 residues: Asparagine--tRNA ligase (464 aa).

This sequence belongs to the class-II aminoacyl-tRNA synthetase family. As to quaternary structure, homodimer.

It localises to the cytoplasm. It catalyses the reaction tRNA(Asn) + L-asparagine + ATP = L-asparaginyl-tRNA(Asn) + AMP + diphosphate + H(+). The protein is Asparagine--tRNA ligase of Clostridium botulinum (strain Eklund 17B / Type B).